We begin with the raw amino-acid sequence, 114 residues long: Probable 4-amino-4-deoxy-L-arabinose-phosphoundecaprenol flippase subunit ArnE (114 aa).

3 helical membrane-spanning segments follow: residues 41 to 61 (PWLI…IYLL), 64 to 84 (LPLS…LIGS), and 94 to 114 (YHNW…GGLL). The EamA domain occupies 53–112 (GMLLWIYLLQRLPLSMAYPMLSINLVLVLIGSRLFFHEQISYHNWLGAGAIIIGALLLGG).

The protein belongs to the ArnE family. As to quaternary structure, heterodimer of ArnE and ArnF.

The protein localises to the cell inner membrane. Its pathway is bacterial outer membrane biogenesis; lipopolysaccharide biosynthesis. Functionally, translocates 4-amino-4-deoxy-L-arabinose-phosphoundecaprenol (alpha-L-Ara4N-phosphoundecaprenol) from the cytoplasmic to the periplasmic side of the inner membrane. The chain is Probable 4-amino-4-deoxy-L-arabinose-phosphoundecaprenol flippase subunit ArnE from Aeromonas salmonicida (strain A449).